Here is a 1149-residue protein sequence, read N- to C-terminus: Eukaryotic translation initiation factor 3 subunit A (1149 aa).

The PCI domain occupies 317-498 (IQRMTSHVLI…HSVHFGTDLS (182 aa)). 2 disordered regions span residues 496 to 515 (DLSESQREDHPDGPTLQSMP) and 811 to 1149 (EEER…KHHR). Residues 811–885 (EEERRRIEEE…APRGEKEERG (75 aa)) show a composition bias toward basic and acidic residues. Over residues 886 to 895 (GGGGGGGAWR) the composition is skewed to gly residues. Residues 908-924 (AKPESDWRNAREAREPA) are compositionally biased toward basic and acidic residues. The segment covering 925–937 (PESAGASSAAAPA) has biased composition (low complexity). 3 stretches are compositionally biased toward basic and acidic residues: residues 961 to 970 (RPPRGDDREP), 1005 to 1095 (GPMR…DRRG), and 1113 to 1132 (EPAKPREERRGGEERPKEAR).

It belongs to the eIF-3 subunit A family. In terms of assembly, component of the eukaryotic translation initiation factor 3 (eIF-3) complex.

Its subcellular location is the cytoplasm. In terms of biological role, RNA-binding component of the eukaryotic translation initiation factor 3 (eIF-3) complex, which is involved in protein synthesis of a specialized repertoire of mRNAs and, together with other initiation factors, stimulates binding of mRNA and methionyl-tRNAi to the 40S ribosome. The eIF-3 complex specifically targets and initiates translation of a subset of mRNAs involved in cell proliferation. The protein is Eukaryotic translation initiation factor 3 subunit A of Culex quinquefasciatus (Southern house mosquito).